We begin with the raw amino-acid sequence, 294 residues long: 2,2',3-trihydroxybiphenyl dioxygenase (294 aa).

VOC domains are found at residues 7-120 (GYLI…LYVE) and 144-264 (GLGH…LGFG). His147, His209, and Glu260 together coordinate Fe cation.

Belongs to the extradiol ring-cleavage dioxygenase family. In terms of assembly, monomer. It depends on Fe(2+) as a cofactor.

It functions in the pathway xenobiotic degradation; dibenzo-p-dioxin degradation; 2-hydroxymuconate and catechol from dibenzo-p-dioxin: step 2/3. It participates in xenobiotic degradation; dibenzofuran degradation; 2-hydroxy-2,4-pentadienoate and salicylate from dibenzofuran: step 2/3. Responsible for meta-cleavage of the first aromatic ring of 2,2',3-trihydroxybiphenyl and 2,3-dihydroxybiphenyl. 2,2',3-trihydroxydiphenyl ether, catechol, 3-methylcatechol, and 4-methylcatechol are oxidized less efficiently and 3,4-dihydroxybiphenyl is oxidized considerably less efficiently. This is 2,2',3-trihydroxybiphenyl dioxygenase (dbfB) from Sphingomonas paucimobilis (Pseudomonas paucimobilis).